We begin with the raw amino-acid sequence, 792 residues long: Oxidoreductase cns1 (792 aa).

In terms of assembly, interacts with cns2.

The protein localises to the lipid droplet. It participates in secondary metabolite biosynthesis. Its function is as follows. Oxidoreductase; part of the gene cluster that mediates the biosynthesis of cordycepin (COR) and pentostatin (PTN), two adenosine analogs with related bioactivity profiles as both mimic adenosine and can inhibit some of the processes that are adenosine dependent. Within the pathway, cns1 catalyzes the last step by converting the cns2 product 2'-carbonyl-3'-deoxyadenosine (2'-C-3'-dA) into cordycepin (3'-deoxyadenosine). The first step of cordycepin biosynthesis involves hydroxyl phosphorylation of the 3'-OH position on adenosine to produce adenosine-3'-monophosphate (3'-AMP), catalyzed by kinase activity of cns3. Next, 3'-AMP is dephosphorylated to 2'-carbonyl-3'-deoxyadenosine by cns2, which is finally converted to cordycepin by the oxidoreductase cns1. Pentostatin production is mediated by the ATP phosphoribosyltransferase activity of cns3 on adenosine to inhibit the activity of adenosine deaminase (ADA) to prevent COR deamination to 3'-deoxyinosine (3'-dI). The sequence is that of Oxidoreductase cns1 from Cordyceps militaris (strain CM01) (Caterpillar fungus).